The chain runs to 516 residues: Nondiscriminating glutamyl-tRNA synthetase EARS2, mitochondrial (516 aa).

A mitochondrion-targeting transit peptide spans methionine 1–phenylalanine 39. Arginine 38–alanine 40 is a binding site for L-glutamate. The 'HIGH' region motif lies at proline 43–glycine 51. An ATP-binding site is contributed by histidine 48. L-glutamate is bound by residues glutamate 74, tyrosine 226 to asparagine 230, and arginine 244. Residues glutamate 247 and lysine 282–arginine 286 each bind ATP. The 'KMSKS' region signature appears at lysine 282–arginine 286.

The protein belongs to the class-I aminoacyl-tRNA synthetase family. Glutamate--tRNA ligase type 1 subfamily.

The protein localises to the mitochondrion matrix. It catalyses the reaction tRNA(Glx) + L-glutamate + ATP = L-glutamyl-tRNA(Glx) + AMP + diphosphate. The enzyme catalyses tRNA(Glu) + L-glutamate + ATP = L-glutamyl-tRNA(Glu) + AMP + diphosphate. The catalysed reaction is tRNA(Gln) + L-glutamate + ATP = L-glutamyl-tRNA(Gln) + AMP + diphosphate. In terms of biological role, non-discriminating glutamyl-tRNA synthetase that catalyzes aminoacylation of both mitochondrial tRNA(Glu) and tRNA(Gln) and participates in RNA aminoacylation for mitochondrial protein translation. Attachs glutamate to tRNA(Glu) or tRNA(Gln) in a two-step reaction: glutamate is first activated by ATP to form Glu-AMP and then transferred to the acceptor end of tRNA(Glu) or tRNA(Gln). The sequence is that of Nondiscriminating glutamyl-tRNA synthetase EARS2, mitochondrial from Xenopus tropicalis (Western clawed frog).